Consider the following 295-residue polypeptide: Bifunctional protein FolD (295 aa).

NADP(+) contacts are provided by residues 166 to 168 (GRS), S195, and I236.

This sequence belongs to the tetrahydrofolate dehydrogenase/cyclohydrolase family. Homodimer.

The catalysed reaction is (6R)-5,10-methylene-5,6,7,8-tetrahydrofolate + NADP(+) = (6R)-5,10-methenyltetrahydrofolate + NADPH. It catalyses the reaction (6R)-5,10-methenyltetrahydrofolate + H2O = (6R)-10-formyltetrahydrofolate + H(+). It functions in the pathway one-carbon metabolism; tetrahydrofolate interconversion. In terms of biological role, catalyzes the oxidation of 5,10-methylenetetrahydrofolate to 5,10-methenyltetrahydrofolate and then the hydrolysis of 5,10-methenyltetrahydrofolate to 10-formyltetrahydrofolate. The sequence is that of Bifunctional protein FolD from Chlorobium phaeobacteroides (strain DSM 266 / SMG 266 / 2430).